A 140-amino-acid polypeptide reads, in one-letter code: Nucleoside diphosphate kinase (140 aa).

Positions 11, 59, 87, 93, 104, and 114 each coordinate ATP. Histidine 117 acts as the Pros-phosphohistidine intermediate in catalysis.

This sequence belongs to the NDK family. In terms of assembly, homotetramer. The cofactor is Mg(2+).

It localises to the cytoplasm. The enzyme catalyses a 2'-deoxyribonucleoside 5'-diphosphate + ATP = a 2'-deoxyribonucleoside 5'-triphosphate + ADP. It catalyses the reaction a ribonucleoside 5'-diphosphate + ATP = a ribonucleoside 5'-triphosphate + ADP. Its function is as follows. Major role in the synthesis of nucleoside triphosphates other than ATP. The ATP gamma phosphate is transferred to the NDP beta phosphate via a ping-pong mechanism, using a phosphorylated active-site intermediate. The sequence is that of Nucleoside diphosphate kinase from Xanthobacter autotrophicus (strain ATCC BAA-1158 / Py2).